The primary structure comprises 190 residues: Lysozyme g (190 aa).

The segment covering 1-10 (MPYGKIEDIK) has biased composition (basic and acidic residues). The interval 1 to 31 (MPYGKIEDIKTSGASDVTAAQDGLKEGGWKS) is disordered. Catalysis depends on residues Glu-71 and Asp-84.

The protein belongs to the glycosyl hydrolase 23 family.

The catalysed reaction is Hydrolysis of (1-&gt;4)-beta-linkages between N-acetylmuramic acid and N-acetyl-D-glucosamine residues in a peptidoglycan and between N-acetyl-D-glucosamine residues in chitodextrins.. This is Lysozyme g from Takifugu rubripes (Japanese pufferfish).